Reading from the N-terminus, the 143-residue chain is Ribosome-binding factor A (143 aa).

A disordered region spans residues 123–143; it reads VRAQAAQAKPAGEANPYKERN. Positions 124 to 136 are enriched in low complexity; that stretch reads RAQAAQAKPAGEA.

It belongs to the RbfA family. In terms of assembly, monomer. Binds 30S ribosomal subunits, but not 50S ribosomal subunits or 70S ribosomes.

It localises to the cytoplasm. Functionally, one of several proteins that assist in the late maturation steps of the functional core of the 30S ribosomal subunit. Associates with free 30S ribosomal subunits (but not with 30S subunits that are part of 70S ribosomes or polysomes). Required for efficient processing of 16S rRNA. May interact with the 5'-terminal helix region of 16S rRNA. The chain is Ribosome-binding factor A from Corynebacterium urealyticum (strain ATCC 43042 / DSM 7109).